Reading from the N-terminus, the 215-residue chain is Uracil-DNA glycosylase (215 aa).

The active-site Proton acceptor is the aspartate 59.

This sequence belongs to the uracil-DNA glycosylase (UDG) superfamily. UNG family.

The protein localises to the cytoplasm. The enzyme catalyses Hydrolyzes single-stranded DNA or mismatched double-stranded DNA and polynucleotides, releasing free uracil.. Its function is as follows. Excises uracil residues from the DNA which can arise as a result of misincorporation of dUMP residues by DNA polymerase or due to deamination of cytosine. The polypeptide is Uracil-DNA glycosylase (Aliarcobacter butzleri (strain RM4018) (Arcobacter butzleri)).